The primary structure comprises 377 residues: Cilia- and flagella-associated protein 263 (377 aa).

Coiled-coil stretches lie at residues 95-139 (LTVE…ADIR) and 169-355 (QKVM…LKGY).

This sequence belongs to the CFAP263 family. As to quaternary structure, forms a complex with CFAP184; the interaction is required for functional activity in cilia. Interacts with HAP1 and PCM1.

Its subcellular location is the cytoplasm. It is found in the cytoskeleton. It localises to the microtubule organizing center. The protein localises to the centrosome. The protein resides in the centriolar satellite. Its subcellular location is the cell projection. It is found in the cilium. Functionally, component of centriolar satellites contributing to primary cilium formation. In complex with CFAP263, acts as a regulator of ciliary beating that connects radial spoke 3 (RS3) to the inner dynein arm (IDA) and the nexin-dynein regulatory complex (N-DRC). The complex is positioned parallel to N-DRC and forms a connection between the arch at the base of RS3, the IDA tail and N-DRC. The protein is Cilia- and flagella-associated protein 263 (Cfap263) of Mus musculus (Mouse).